The chain runs to 358 residues: Peptide chain release factor 1 (358 aa).

Q233 is subject to N5-methylglutamine.

It belongs to the prokaryotic/mitochondrial release factor family. Post-translationally, methylated by PrmC. Methylation increases the termination efficiency of RF1.

Its subcellular location is the cytoplasm. Its function is as follows. Peptide chain release factor 1 directs the termination of translation in response to the peptide chain termination codons UAG and UAA. This chain is Peptide chain release factor 1, found in Staphylococcus aureus (strain MRSA252).